Consider the following 415-residue polypeptide: Putative O-antigen transporter (415 aa).

Residues 1–11 are Cytoplasmic-facing; it reads MNTNKLSLRRN. Residues 12-32 traverse the membrane as a helical segment; sequence VIYLAVVQGSNYLLPLLTFPY. Residues 33–41 are Periplasmic-facing; the sequence is LVRTLGPEN. The helical transmembrane segment at 42-62 threads the bilayer; that stretch reads FGIFGFCQATMLYMIMFVEYG. The Cytoplasmic portion of the chain corresponds to 63–83; that stretch reads FNLTATQSIAKAADSKDKVTS. Residues 84–104 form a helical membrane-spanning segment; sequence IFWAVIFSKIVLIVITLIFLT. Topologically, residues 105–117 are periplasmic; that stretch reads SMTLLVPEYNKHA. The helical transmembrane segment at 118-138 threads the bilayer; it reads VIIWSFVPALVGNLIYPIWLF. The Cytoplasmic portion of the chain corresponds to 139-173; sequence QGKEKMKWLTLSSILSRLAIIPLTFIFVNTKSDIA. A helical transmembrane segment spans residues 174–194; that stretch reads IAGFIQSSANLVAGIIALAIV. The Periplasmic portion of the chain corresponds to 195–220; the sequence is VHEGWIGKVTLSLHNVRRSLADGFHV. Residues 221–241 form a helical membrane-spanning segment; that stretch reads FISTSAISLYSTGIVIILGFI. At 242-295 the chain is on the cytoplasmic side; the sequence is SGPTSVGNFNAANTIRNALQGLLNPITQAIYPRISSTLVLNRVKGVILIKKSLT. A helical membrane pass occupies residues 296 to 316; sequence CLSLIGGAFSLILLLGASILV. The Periplasmic portion of the chain corresponds to 317–328; the sequence is KISIGPGYDNAV. Residues 329-349 traverse the membrane as a helical segment; it reads IVLMIISPLPFLISLSNVYGI. Residues 350–362 are Cytoplasmic-facing; it reads QVMLTHNYKKEFS. Residues 363–383 form a helical membrane-spanning segment; that stretch reads KILIAAGLLSLLLIFPLTTLF. The Periplasmic portion of the chain corresponds to 384–385; that stretch reads KE. Residues 386–406 form a helical membrane-spanning segment; that stretch reads IGAAITLLATECLVTSLMLMF. At 407–415 the chain is on the cytoplasmic side; that stretch reads VRNNKLLVC.

The protein belongs to the polysaccharide synthase family.

It localises to the cell inner membrane. Its pathway is bacterial outer membrane biogenesis; LPS O-antigen biosynthesis. In terms of biological role, may be involved in the translocation process of the nascent O-polysaccharide molecules and/or its ligation to lipid A core units. This chain is Putative O-antigen transporter (rfbX), found in Escherichia coli (strain K12).